A 257-amino-acid chain; its full sequence is Putative hydro-lyase BceJ2315_40370 (257 aa).

Belongs to the D-glutamate cyclase family.

The chain is Putative hydro-lyase BceJ2315_40370 from Burkholderia cenocepacia (strain ATCC BAA-245 / DSM 16553 / LMG 16656 / NCTC 13227 / J2315 / CF5610) (Burkholderia cepacia (strain J2315)).